We begin with the raw amino-acid sequence, 205 residues long: Small ribosomal subunit protein uS4 (205 aa).

The disordered stretch occupies residues 19–45; it reads IWGRPKSPVNRREYGPGQHGQRRKGKL. The 64-residue stretch at 94-157 folds into the S4 RNA-binding domain; sequence SRLDAVVYRA…KQLAIVLEAV (64 aa).

Belongs to the universal ribosomal protein uS4 family. Part of the 30S ribosomal subunit. Contacts protein S5. The interaction surface between S4 and S5 is involved in control of translational fidelity.

In terms of biological role, one of the primary rRNA binding proteins, it binds directly to 16S rRNA where it nucleates assembly of the body of the 30S subunit. Its function is as follows. With S5 and S12 plays an important role in translational accuracy. This Brucella melitensis biotype 2 (strain ATCC 23457) protein is Small ribosomal subunit protein uS4.